Here is a 356-residue protein sequence, read N- to C-terminus: MTICTDIIANGYDLKTLIYNSGVVSIKVIALIICLLLATAYLTFAERKVIAYMQLRVGPSLAGPFGLLQPIADAIKLVFKEPIIPAKADRKLFIIAPIITFVLSLLGWSVIPIDHDIVLSRIHIGGILFILAVTSLGVYGIIIAGWASNSKYAFLGAVRSAAQMISYELAMALSIVAVLIVTGEMDLIQIVEAQKTRPIWLTIMMLPLAVIYFISILAKTNRLPFDLPEAESELVAGYNVEYSSMAFAMFFLGEYANMILGSSLMTIMFLGGYLPPFNLEILTFIPGYIWFILKVSMVLFCFLWIRATLPRYRYDQLMYLGLKVFLPIVLAWIIVVSTILVYSNNLPIALETVLNK.

9 helical membrane passes run 22-42, 59-79, 93-113, 124-144, 171-191, 198-218, 240-260, 285-305, and 321-341; these read GVVS…TAYL, PSLA…KLVF, FIIA…VIPI, IGGI…IIIA, MALS…IQIV, PIWL…SILA, VEYS…NMIL, IPGY…FLWI, and GLKV…TILV.

The protein belongs to the complex I subunit 1 family. NDH-1 is composed of 14 different subunits. Subunits NuoA, H, J, K, L, M, N constitute the membrane sector of the complex.

The protein resides in the cell inner membrane. The catalysed reaction is a quinone + NADH + 5 H(+)(in) = a quinol + NAD(+) + 4 H(+)(out). NDH-1 shuttles electrons from NADH, via FMN and iron-sulfur (Fe-S) centers, to quinones in the respiratory chain. The immediate electron acceptor for the enzyme in this species is believed to be ubiquinone. Couples the redox reaction to proton translocation (for every two electrons transferred, four hydrogen ions are translocated across the cytoplasmic membrane), and thus conserves the redox energy in a proton gradient. This subunit may bind ubiquinone. The chain is NADH-quinone oxidoreductase subunit H from Orientia tsutsugamushi (strain Boryong) (Rickettsia tsutsugamushi).